Reading from the N-terminus, the 296-residue chain is Acetylglutamate kinase (296 aa).

Substrate contacts are provided by residues 68 to 69 (GG), arginine 90, and asparagine 193.

It belongs to the acetylglutamate kinase family. ArgB subfamily.

It localises to the cytoplasm. It carries out the reaction N-acetyl-L-glutamate + ATP = N-acetyl-L-glutamyl 5-phosphate + ADP. The protein operates within amino-acid biosynthesis; L-arginine biosynthesis; N(2)-acetyl-L-ornithine from L-glutamate: step 2/4. Functionally, catalyzes the ATP-dependent phosphorylation of N-acetyl-L-glutamate. The protein is Acetylglutamate kinase of Acidothermus cellulolyticus (strain ATCC 43068 / DSM 8971 / 11B).